The primary structure comprises 121 residues: Large ribosomal subunit protein bL20 (121 aa).

Belongs to the bacterial ribosomal protein bL20 family.

Binds directly to 23S ribosomal RNA and is necessary for the in vitro assembly process of the 50S ribosomal subunit. It is not involved in the protein synthesizing functions of that subunit. The polypeptide is Large ribosomal subunit protein bL20 (Dinoroseobacter shibae (strain DSM 16493 / NCIMB 14021 / DFL 12)).